A 234-amino-acid polypeptide reads, in one-letter code: Phosphoribosylformylglycinamidine synthase subunit PurQ (234 aa).

Residues 5 to 234 (TVGIVVFPGS…ESLFAHLAGA (230 aa)) form the Glutamine amidotransferase type-1 domain. C89 acts as the Nucleophile in catalysis. Residues H206 and E208 contribute to the active site.

In terms of assembly, part of the FGAM synthase complex composed of 1 PurL, 1 PurQ and 2 PurS subunits.

The protein localises to the cytoplasm. It catalyses the reaction N(2)-formyl-N(1)-(5-phospho-beta-D-ribosyl)glycinamide + L-glutamine + ATP + H2O = 2-formamido-N(1)-(5-O-phospho-beta-D-ribosyl)acetamidine + L-glutamate + ADP + phosphate + H(+). The catalysed reaction is L-glutamine + H2O = L-glutamate + NH4(+). It functions in the pathway purine metabolism; IMP biosynthesis via de novo pathway; 5-amino-1-(5-phospho-D-ribosyl)imidazole from N(2)-formyl-N(1)-(5-phospho-D-ribosyl)glycinamide: step 1/2. Functionally, part of the phosphoribosylformylglycinamidine synthase complex involved in the purines biosynthetic pathway. Catalyzes the ATP-dependent conversion of formylglycinamide ribonucleotide (FGAR) and glutamine to yield formylglycinamidine ribonucleotide (FGAM) and glutamate. The FGAM synthase complex is composed of three subunits. PurQ produces an ammonia molecule by converting glutamine to glutamate. PurL transfers the ammonia molecule to FGAR to form FGAM in an ATP-dependent manner. PurS interacts with PurQ and PurL and is thought to assist in the transfer of the ammonia molecule from PurQ to PurL. The protein is Phosphoribosylformylglycinamidine synthase subunit PurQ of Chlorobaculum tepidum (strain ATCC 49652 / DSM 12025 / NBRC 103806 / TLS) (Chlorobium tepidum).